We begin with the raw amino-acid sequence, 289 residues long: UPF0761 membrane protein ESA_04062 (289 aa).

A run of 6 helical transmembrane segments spans residues 44–64 (LLSL…FPMF), 104–124 (VGAL…DSAL), 140–160 (FAVY…SLVI), 183–203 (IFPL…VPTT), 215–235 (LVAA…ITMF), and 244–264 (VLAV…IVLL).

Belongs to the UPF0761 family.

The protein localises to the cell inner membrane. The sequence is that of UPF0761 membrane protein ESA_04062 from Cronobacter sakazakii (strain ATCC BAA-894) (Enterobacter sakazakii).